The following is a 208-amino-acid chain: Ypt/Rab-type GTPase YPT7 (208 aa).

GTP is bound by residues 17-23, 33-40, Gly-67, and 126-129; these read SGVGKTS, YSQQYKAT, and NKID. An Effector region motif is present at residues 37–45; sequence YKATIGADF. A Glycyl lysine isopeptide (Lys-Gly) (interchain with G-Cter in ubiquitin) cross-link involves residue Lys-147. 158–160 serves as a coordination point for GTP; that stretch reads SAK. 2 S-geranylgeranyl cysteine lipidation sites follow: Cys-206 and Cys-208. Cys-208 carries the cysteine methyl ester modification.

It belongs to the small GTPase superfamily. Rab family. As to quaternary structure, interacts with IVY1. Interacts with YIF1, YIP4 and YIP5. Interacts with the HOPS complex. Interacts with the class C-Vps complex. Interacts with VPS35. Interacts with VPS39. Interacts with the GDP dissociation inhibitor GDI1. Interacts with CCZ1.

The protein localises to the late endosome. Its subcellular location is the vacuole membrane. With respect to regulation, rab activation is generally mediated by a guanine exchange factor (GEF), while inactivation through hydrolysis of bound GTP is catalyzed by a GTPase activating protein (GAP). YPT7 is activated by GEFs MON1-CCZ1 complex (MC1) and VAM6/VPS39, and inactivated by GAPs GYP7 and GYP1. Its function is as follows. Ypt/Rab-type GTPases are key regulators of membrane trafficking and intracellular vesicular transport. They act as molecular switches that convert between GTP-bound and GDP-bound states, and regulate virtually all steps of membrane traffic from the formation of the transport vesicle at the donor membrane to its fusion at the target membrane. In the GDP-bound state, Ypt proteins are predominantly cytosolic, solubilized through the interaction with a GDP dissociation inhibitor (GDI). In the GTP-bound state, the proteins are membrane bound and interact with specific effector proteins that select cargo, promote vesicle movement, or verify the correct site of fusion. Involved in regulation of vesicular protein transport in exo- and endocytosis. Involved in regulation of late endosome to vacuole trafficking and homotypic vacuole fusion, by interacting in its GTP-bound state on the donor membrane with the large multiprotein HOPS/class C-Vps tethering complex on the acceptor membrane. Involved in retromer assembly and cargo export, recognizing the cargo selection complex (CSC). GTP-bound YPT7 recruits CSC to vacuolar membranes via retromer subunit VPS35. Interacts with the HOPS complex subunit VPS39 independent of the HOPS complex at mitochondria-vacuole contact sites (vCLAMPs), providing a physical and metabolic interconnection between the endocytic pathway and mitochondria. This is Ypt/Rab-type GTPase YPT7 (YPT7) from Saccharomyces cerevisiae (strain ATCC 204508 / S288c) (Baker's yeast).